The following is a 101-amino-acid chain: Large ribosomal subunit protein eL31 (101 aa).

The protein belongs to the eukaryotic ribosomal protein eL31 family.

The chain is Large ribosomal subunit protein eL31 from Ignicoccus hospitalis (strain KIN4/I / DSM 18386 / JCM 14125).